Consider the following 130-residue polypeptide: Fumarate reductase subunit C (130 aa).

3 consecutive transmembrane segments (helical) span residues 30-50 (EGTSIPAVWFSVLLIYGVFSL), 60-80 (FVSFLQNPLVLFLNILTLFAA), and 110-130 (IKALWVVTVVASAIILAVALL).

Belongs to the FrdC family. Part of an enzyme complex containing four subunits: a flavoprotein (FrdA), an iron-sulfur protein (FrdB), and two hydrophobic anchor proteins (FrdC and FrdD).

The protein resides in the cell inner membrane. Functionally, two distinct, membrane-bound, FAD-containing enzymes are responsible for the catalysis of fumarate and succinate interconversion; fumarate reductase is used in anaerobic growth, and succinate dehydrogenase is used in aerobic growth. Anchors the catalytic components of the fumarate reductase complex to the cell inner membrane, binds quinones. The sequence is that of Fumarate reductase subunit C from Yersinia pestis bv. Antiqua (strain Angola).